Consider the following 143-residue polypeptide: Large ribosomal subunit protein mL51 (143 aa).

A mitochondrion-targeting transit peptide spans 1 to 52 (MAALVRGLMRRVAALPQAVRSVSGGGQRHEPYRPLPITSPLAGLPRNFRVRE).

The protein belongs to the mitochondrion-specific ribosomal protein mL51 family. In terms of assembly, component of the mitochondrial ribosome large subunit (39S) which comprises a 16S rRNA and about 50 distinct proteins.

The protein resides in the mitochondrion. This Gallus gallus (Chicken) protein is Large ribosomal subunit protein mL51 (MRPL51).